The chain runs to 348 residues: Lipoyl synthase (348 aa).

Residues 1-45 are disordered; that stretch reads MSESAKPRITSGSKFRNEHGFSAIKDGVKRSSSNTEGKSLERKPK. [4Fe-4S] cluster contacts are provided by Cys73, Cys78, Cys84, Cys99, Cys103, Cys106, and Ser314. One can recognise a Radical SAM core domain in the interval 85–303; it reads WTNGTATIMV…RDIGLEKGFM (219 aa).

The protein belongs to the radical SAM superfamily. Lipoyl synthase family. It depends on [4Fe-4S] cluster as a cofactor.

The protein localises to the cytoplasm. It catalyses the reaction [[Fe-S] cluster scaffold protein carrying a second [4Fe-4S](2+) cluster] + N(6)-octanoyl-L-lysyl-[protein] + 2 oxidized [2Fe-2S]-[ferredoxin] + 2 S-adenosyl-L-methionine + 4 H(+) = [[Fe-S] cluster scaffold protein] + N(6)-[(R)-dihydrolipoyl]-L-lysyl-[protein] + 4 Fe(3+) + 2 hydrogen sulfide + 2 5'-deoxyadenosine + 2 L-methionine + 2 reduced [2Fe-2S]-[ferredoxin]. Its pathway is protein modification; protein lipoylation via endogenous pathway; protein N(6)-(lipoyl)lysine from octanoyl-[acyl-carrier-protein]: step 2/2. Its function is as follows. Catalyzes the radical-mediated insertion of two sulfur atoms into the C-6 and C-8 positions of the octanoyl moiety bound to the lipoyl domains of lipoate-dependent enzymes, thereby converting the octanoylated domains into lipoylated derivatives. The sequence is that of Lipoyl synthase from Marinobacter nauticus (strain ATCC 700491 / DSM 11845 / VT8) (Marinobacter aquaeolei).